A 138-amino-acid chain; its full sequence is MGRDTIADIITSIRNVDMNRKGTVRIESTNMAEKIVKILLREGFIENVRKHQENKKSFLVLTLRHRRNRKGPSPSRTFLNLNLKRISRPGLRVYSNYQKIPRILGGMGIVILSTSRGIMTDREARLEGIGGEILCYIW.

The protein belongs to the universal ribosomal protein uS8 family. Part of the 30S ribosomal subunit.

The protein resides in the plastid. It is found in the chloroplast. Its function is as follows. One of the primary rRNA binding proteins, it binds directly to 16S rRNA central domain where it helps coordinate assembly of the platform of the 30S subunit. This is Small ribosomal subunit protein uS8c (rps8) from Oenothera elata subsp. hookeri (Hooker's evening primrose).